The primary structure comprises 565 residues: Wee1-like protein kinase 2 (565 aa).

Basic and acidic residues-rich tracts occupy residues 1–12 and 26–52; these read MGDNGDNKELKQ and EGQK…DSEA. Disordered stretches follow at residues 1–142 and 169–189; these read MGDN…TPGP and KSNG…EEGK. Residue S77 is modified to Phosphoserine. Positions 173 to 175 match the Nuclear localization signal motif; it reads KRK. Positions 178 to 189 are enriched in basic and acidic residues; sequence RDLEEAGPEEGK. One can recognise a Protein kinase domain in the interval 214–492; the sequence is FLEVEKIGVG…TRSRVLCPSL (279 aa). Residues 220–228 and K243 each bind ATP; that span reads IGVGEFGTV. The Nuclear export signal motif lies at 317-331; that stretch reads KLKDILLQISLGLKY. D341 acts as the Proton acceptor in catalysis. Mg(2+)-binding residues include N346 and D382. Residues 495–521 are a coiled coil; sequence TEELQQQLNLEKFKTATLERELKEVQR. The tract at residues 518–565 is disordered; it reads EVQRAQSSKEGQSSPGVTGTHTGSRSTRRLVGGKSAKSSSFTWGQSSP. Polar residues-rich tracts occupy residues 521-534 and 553-565; these read RAQS…SPGV and AKSS…QSSP.

The protein belongs to the protein kinase superfamily. Ser/Thr protein kinase family. WEE1 subfamily. Phosphorylation leads to increase its activity. In terms of tissue distribution, ovary-specific.

It is found in the nucleus. It carries out the reaction L-tyrosyl-[protein] + ATP = O-phospho-L-tyrosyl-[protein] + ADP + H(+). Its function is as follows. Oocyte-specific protein tyrosine kinase that phosphorylates and inhibits CDK1 and acts as a key regulator of meiosis during both prophase I and metaphase II. Required to maintain meiotic arrest in oocytes during the germinal vesicle (GV) stage, a long period of quiescence at dictyate prophase I, by phosphorylating CDK1 at 'Tyr-15', leading to inhibit CDK1 activity and prevent meiotic reentry. Also required for metaphase II exit during egg activation by phosphorylating CDK1 at 'Tyr-15', to ensure exit from meiosis in oocytes and promote pronuclear formation. The polypeptide is Wee1-like protein kinase 2 (WEE2) (Sus scrofa (Pig)).